The sequence spans 431 residues: MLERLSWKRLVLELLLCCLPAFILGAFFGYLPWFLLASVTGLLIWHFWNLLRLSWWLWVDRSMTPPPGRGSWEPLLYGLHQMQLRNKKRRRELGNLIKRFRSGAESLPDAVVLTTEEGGIFWCNGLAQQILGLRWPEDNGQNILNLLRYPEFTQYLKTRDFSRPLNLVLNTGRHLEIRVMPYTHKQLLMVARDVTQMHQLEGARRNFFANVSHELRTPLTVLQGYLEMMNEQPLEGAVREKALHTMREQTQRMEGLVKQLLTLSKIEAAPTHLLNEKVDVPMMLRVVEREAQTLSQKKQTFTFEIDNGLKVSGNEDQLRSAISNLVYNAVNHTPEGTHITVRWQRVPHGAEFSVEDNGPGIAPEHIPRLTERFYRVDKARSRQTGGSGLGLAIVKHAVNHHESRLNIESTVGKGTRFSFVIPERLIAKNSD.

At 1–9 (MLERLSWKR) the chain is on the cytoplasmic side. Residues 10–28 (LVLELLLCCLPAFILGAFF) form a helical membrane-spanning segment. Over 29 to 32 (GYLP) the chain is Periplasmic. Residues 33-51 (WFLLASVTGLLIWHFWNLL) form a helical membrane-spanning segment. The Cytoplasmic portion of the chain corresponds to 52–431 (RLSWWLWVDR…PERLIAKNSD (380 aa)). Residues 96–172 (LIKRFRSGAE…RPLNLVLNTG (77 aa)) form the PAS domain. The Histidine kinase domain occupies 210–425 (NVSHELRTPL…RFSFVIPERL (216 aa)). His-213 carries the phosphohistidine; by autocatalysis modification.

The protein resides in the cell inner membrane. It catalyses the reaction ATP + protein L-histidine = ADP + protein N-phospho-L-histidine.. Member of the two-component regulatory system PhoR/PhoB involved in the phosphate regulon genes expression. PhoR may function as a membrane-associated protein kinase that phosphorylates PhoB in response to environmental signals. The chain is Phosphate regulon sensor protein PhoR (phoR) from Escherichia coli (strain K12).